The following is a 353-amino-acid chain: Guanine nucleotide-binding protein subunit alpha (353 aa).

The interval 1 to 25 (MGCGMSTEDKEGKARNEEIENQLKR) is disordered. The N-myristoyl glycine moiety is linked to residue Gly2. Cys3 carries the S-palmitoyl cysteine lipid modification. Basic and acidic residues predominate over residues 7–25 (TEDKEGKARNEEIENQLKR). A G-alpha domain is found at 32–353 (NEIKMLLLGA…QENLRLCGLI (322 aa)). The interval 35–48 (KMLLLGAGESGKST) is G1 motif. 14 residues coordinate GTP: Glu43, Ser44, Gly45, Lys46, Ser47, Thr48, Asp150, Leu175, Thr181, Gly203, Asn269, Lys270, Asp272, and Ala325. Ser47 contacts Mg(2+). The G2 motif stretch occupies residues 173-181 (DVLRSRVKT). A Mg(2+)-binding site is contributed by Thr181. The segment at 196 to 205 (YRMFDVGGQR) is G3 motif. The interval 265 to 272 (ILFLNKID) is G4 motif. Residues 323–328 (TCATDT) are G5 motif.

It belongs to the G-alpha family. G(q) subfamily. In terms of assembly, g proteins are composed of 3 units; alpha, beta and gamma. The alpha chain contains the guanine nucleotide binding site. Requires Mg(2+) as cofactor.

Guanine nucleotide-binding proteins (G proteins) are involved as modulators or transducers in various transmembrane signaling systems. This is Guanine nucleotide-binding protein subunit alpha (fadA) from Emericella nidulans (strain FGSC A4 / ATCC 38163 / CBS 112.46 / NRRL 194 / M139) (Aspergillus nidulans).